Here is a 264-residue protein sequence, read N- to C-terminus: Ribosomal RNA small subunit methyltransferase A (264 aa).

Positions 15, 17, 42, 63, 88, and 109 each coordinate S-adenosyl-L-methionine.

This sequence belongs to the class I-like SAM-binding methyltransferase superfamily. rRNA adenine N(6)-methyltransferase family. RsmA subfamily.

Its subcellular location is the cytoplasm. The catalysed reaction is adenosine(1518)/adenosine(1519) in 16S rRNA + 4 S-adenosyl-L-methionine = N(6)-dimethyladenosine(1518)/N(6)-dimethyladenosine(1519) in 16S rRNA + 4 S-adenosyl-L-homocysteine + 4 H(+). Specifically dimethylates two adjacent adenosines (A1518 and A1519) in the loop of a conserved hairpin near the 3'-end of 16S rRNA in the 30S particle. May play a critical role in biogenesis of 30S subunits. This chain is Ribosomal RNA small subunit methyltransferase A, found in Nitrosococcus oceani (strain ATCC 19707 / BCRC 17464 / JCM 30415 / NCIMB 11848 / C-107).